We begin with the raw amino-acid sequence, 301 residues long: Probable alpha-L-glutamate ligase (301 aa).

Residues Leu-104 to Glu-287 form the ATP-grasp domain. ATP-binding positions include Lys-141, Glu-178 to Tyr-179, Asp-187, and Arg-211 to Asn-213. Positions 248, 260, and 262 each coordinate Mg(2+). Positions 248, 260, and 262 each coordinate Mn(2+).

It belongs to the RimK family. The cofactor is Mg(2+). It depends on Mn(2+) as a cofactor.

The protein is Probable alpha-L-glutamate ligase of Pseudoalteromonas translucida (strain TAC 125).